A 173-amino-acid polypeptide reads, in one-letter code: Shikimate kinase 1 (173 aa).

ATP is bound at residue 14–19; that stretch reads GAGKST. Residue Ser-18 coordinates Mg(2+). Residues Asp-36, Arg-60, and Gly-82 each coordinate substrate. Arg-120 is a binding site for ATP. Arg-140 serves as a coordination point for substrate. ATP is bound at residue Gln-157.

This sequence belongs to the shikimate kinase family. In terms of assembly, monomer. It depends on Mg(2+) as a cofactor.

It localises to the cytoplasm. It carries out the reaction shikimate + ATP = 3-phosphoshikimate + ADP + H(+). The protein operates within metabolic intermediate biosynthesis; chorismate biosynthesis; chorismate from D-erythrose 4-phosphate and phosphoenolpyruvate: step 5/7. In terms of biological role, catalyzes the specific phosphorylation of the 3-hydroxyl group of shikimic acid using ATP as a cosubstrate. In Pectobacterium atrosepticum (strain SCRI 1043 / ATCC BAA-672) (Erwinia carotovora subsp. atroseptica), this protein is Shikimate kinase 1.